The primary structure comprises 117 residues: Putative phosphotransferase enzyme IIB component MPN_268 (117 aa).

Residues 1-21 traverse the membrane as a helical segment; it reads MKVLLWIGYVLSFGLLYLYLV. Positions 42-117 constitute a PTS EIIB type-1 domain; that stretch reads PFAVRDFIAA…QLKQQIENER (76 aa).

Its subcellular location is the membrane. Its function is as follows. The phosphoenolpyruvate-dependent sugar phosphotransferase system (PTS), a major carbohydrate active -transport system, catalyzes the phosphorylation of incoming sugar substrates concomitant with their translocation across the cell membrane. The protein is Putative phosphotransferase enzyme IIB component MPN_268 of Mycoplasma pneumoniae (strain ATCC 29342 / M129 / Subtype 1) (Mycoplasmoides pneumoniae).